The primary structure comprises 501 residues: MEPQDPVKREGRLTPVIVLATLIAAFGSSFQYGYNVATINSPSEFMKDFYNYTYYDRVGEYMNEFYLTLLWSVTVSMFPFGGFLGSLMVGPLVNNLGRKGTLLFNNIFSIVPALLMGFSDLAKSFEMIIVARVLVGICAGLSSNVVPMYLGELAPKNWRGALGVVPQLFITIGILVAQIFGLRSLLANEEGWPILLGLTGIPAVLQLLFLPFFPESPRYLLIQKKDEEAAKRALRRLRGWHDVDAEIEEILEEDRAEKAAGFISVLKLFKMRSLRWQVISIIVLMAGQQLSGVNAIYYYADQIYLSAGVKEDDVQYVTAGTGAVNVLITVCAIFVVELMGRRFLLLLGFSVCFTACCVLTGALAMQDVISWMPYVSIACVISYVIGHALGPSPIPALLVTEIFLQSSRPAAYMVAGTVHWLSNFTVGLVFPFIQVGLGAYSFVIFAVICFLTTVYIFLIIPETKSKTFIEINQIFIKMNKVPGVHPEKEELKEFPPSTARQ.

At Met1 the chain carries N-acetylmethionine. Residues Met1–Val18 lie on the Cytoplasmic side of the membrane. A helical transmembrane segment spans residues Leu19–Ile39. D-fructose is bound at residue Tyr32. Over Asn40 to Thr68 the chain is Extracellular. A glycan (N-linked (GlcNAc...) asparagine) is linked at Asn51. Residues Leu69–Pro91 traverse the membrane as a helical segment. Residues Leu92–Arg98 are Cytoplasmic-facing. The helical transmembrane segment at Lys99–Ser119 threads the bilayer. The Extracellular portion of the chain corresponds to Asp120–Glu126. Residues Met127–Tyr149 form a helical membrane-spanning segment. Topologically, residues Leu150–Ala161 are cytoplasmic. A helical membrane pass occupies residues Leu162–Leu182. Position 167 (Gln167) interacts with D-fructose. Residues Arg183–Trp192 lie on the Extracellular side of the membrane. Residues Pro193–Phe213 form a helical membrane-spanning segment. At Pro214–Gln277 the chain is on the cytoplasmic side. A helical membrane pass occupies residues Val278–Tyr298. Residues Gln288 and Ile296–Tyr298 contribute to the D-fructose site. Residues Tyr299–Asp313 are Extracellular-facing. The chain crosses the membrane as a helical span at residues Val314–Phe334. Over Val335–Arg342 the chain is Cytoplasmic. The helical transmembrane segment at Phe343–Leu363 threads the bilayer. Residues Ala364 to Trp371 lie on the Extracellular side of the membrane. Residues Met372–Ile394 form a helical membrane-spanning segment. D-fructose is bound at residue His387. Residues Pro395–Tyr412 are Cytoplasmic-facing. A helical transmembrane segment spans residues Met413–Ile433. D-fructose is bound at residue His419–Trp420. Residues Gln434 to Ala439 lie on the Extracellular side of the membrane. A helical membrane pass occupies residues Tyr440 to Ile460. Residues Pro461 to Gln501 lie on the Cytoplasmic side of the membrane.

Belongs to the major facilitator superfamily. Sugar transporter (TC 2.A.1.1) family. Glucose transporter subfamily.

The protein resides in the apical cell membrane. The protein localises to the cell membrane. Its subcellular location is the sarcolemma. It catalyses the reaction D-fructose(out) = D-fructose(in). Functions as a fructose transporter that has only low activity with other monosaccharides. Can mediate the uptake of deoxyglucose, but with low efficiency. Essential for fructose uptake in the small intestine. Plays a role in the regulation of salt uptake and blood pressure in response to dietary fructose. Required for the development of high blood pressure in response to high dietary fructose intake. This chain is Solute carrier family 2, facilitated glucose transporter member 5, found in Ovis aries (Sheep).